The following is a 290-amino-acid chain: uncharacterized protein (290 aa).

This is an uncharacterized protein from Ictalurid herpesvirus 1 (strain Auburn) (IcHV-1).